A 130-amino-acid polypeptide reads, in one-letter code: Small ribosomal subunit protein uS8 (130 aa).

The protein belongs to the universal ribosomal protein uS8 family. In terms of assembly, part of the 30S ribosomal subunit. Contacts proteins S5 and S12.

Functionally, one of the primary rRNA binding proteins, it binds directly to 16S rRNA central domain where it helps coordinate assembly of the platform of the 30S subunit. In Neisseria meningitidis serogroup C (strain 053442), this protein is Small ribosomal subunit protein uS8.